Here is a 156-residue protein sequence, read N- to C-terminus: Regulatory protein RecX (156 aa).

It belongs to the RecX family.

It localises to the cytoplasm. In terms of biological role, modulates RecA activity. The chain is Regulatory protein RecX from Pseudomonas putida (strain ATCC 47054 / DSM 6125 / CFBP 8728 / NCIMB 11950 / KT2440).